The sequence spans 463 residues: Siroheme synthase (463 aa).

The tract at residues 1-203 (MDYLPLFHKL…GQGAEAERLL (203 aa)) is precorrin-2 dehydrogenase /sirohydrochlorin ferrochelatase. NAD(+)-binding positions include 22–23 (EI) and 43–44 (PE). Ser128 bears the Phosphoserine mark. A uroporphyrinogen-III C-methyltransferase region spans residues 216-463 (GEVYLVGAGP…LAWFEGAQNS (248 aa)). Pro225 is an S-adenosyl-L-methionine binding site. The Proton acceptor role is filled by Asp248. Lys270 serves as the catalytic Proton donor. Residues 301-303 (GGD), Ile306, 331-332 (TA), Met383, and Gly412 each bind S-adenosyl-L-methionine.

It in the N-terminal section; belongs to the precorrin-2 dehydrogenase / sirohydrochlorin ferrochelatase family. The protein in the C-terminal section; belongs to the precorrin methyltransferase family.

The catalysed reaction is uroporphyrinogen III + 2 S-adenosyl-L-methionine = precorrin-2 + 2 S-adenosyl-L-homocysteine + H(+). The enzyme catalyses precorrin-2 + NAD(+) = sirohydrochlorin + NADH + 2 H(+). It carries out the reaction siroheme + 2 H(+) = sirohydrochlorin + Fe(2+). It participates in cofactor biosynthesis; adenosylcobalamin biosynthesis; precorrin-2 from uroporphyrinogen III: step 1/1. Its pathway is cofactor biosynthesis; adenosylcobalamin biosynthesis; sirohydrochlorin from precorrin-2: step 1/1. The protein operates within porphyrin-containing compound metabolism; siroheme biosynthesis; precorrin-2 from uroporphyrinogen III: step 1/1. It functions in the pathway porphyrin-containing compound metabolism; siroheme biosynthesis; siroheme from sirohydrochlorin: step 1/1. It participates in porphyrin-containing compound metabolism; siroheme biosynthesis; sirohydrochlorin from precorrin-2: step 1/1. In terms of biological role, multifunctional enzyme that catalyzes the SAM-dependent methylations of uroporphyrinogen III at position C-2 and C-7 to form precorrin-2 via precorrin-1. Then it catalyzes the NAD-dependent ring dehydrogenation of precorrin-2 to yield sirohydrochlorin. Finally, it catalyzes the ferrochelation of sirohydrochlorin to yield siroheme. The protein is Siroheme synthase of Pseudomonas entomophila (strain L48).